The following is a 371-amino-acid chain: Putative F-box protein At1g58090 (371 aa).

One can recognise an F-box domain in the interval 1–46 (MVSKKLPLDLEEEILFRVPPRSLVRFRSVCREWNTLFKNKRFINKN).

The protein is Putative F-box protein At1g58090 of Arabidopsis thaliana (Mouse-ear cress).